The chain runs to 132 residues: Methylglyoxal synthase (132 aa).

In terms of domain architecture, MGS-like spans 1 to 132 (MNIALIAHDQ…LLEWREIEDK (132 aa)). Residues histidine 8 and lysine 12 each contribute to the substrate site. The active-site Proton donor/acceptor is aspartate 60. Histidine 87 is a binding site for substrate.

It belongs to the methylglyoxal synthase family.

The catalysed reaction is dihydroxyacetone phosphate = methylglyoxal + phosphate. Its function is as follows. Catalyzes the formation of methylglyoxal from dihydroxyacetone phosphate. This is Methylglyoxal synthase from Thermoanaerobacter pseudethanolicus (strain ATCC 33223 / 39E) (Clostridium thermohydrosulfuricum).